A 417-amino-acid chain; its full sequence is MFNKSQTLAKVDIEIHQAITQEKVRQEAHIELIASENYTSPAVMEAQGSQLTNKYAEGYPRKRYYGGCEYVDTVEQLAIDRAKVLFGADYANVQPHSGSQANAAVFQALLVPGDTILGMSLVHGGHLTHGAAPSFSGKNFNAIQYGLNEKTGEINYEQVEALVKKHKPKMIIAGFSAYSRVVDWQYFREIADTAGAYLMVDMAHVAGLVVTGEYPSPVAIADVTTTTTHKTLRGPRGGLILAKANEAIEKKLNSAIFPGIQGGPLMHVIAAKAVSFKEAMSDEYKVYQKQVKINAQVMANIFIERGFDVVSGGTDDHLFLVSFIDQRLTGKAVDAALDSAYITVNMNVVPNDPQSPFVTSGIRVGTPAVTTRGFNEADCADLAMWMCDICADLENEAMIDQVREKVTSLCVKHPVYN.

(6S)-5,6,7,8-tetrahydrofolate-binding positions include Leu121 and 125–127 (GHL). Residue Lys230 is modified to N6-(pyridoxal phosphate)lysine. Residue 355–357 (SPF) participates in (6S)-5,6,7,8-tetrahydrofolate binding.

Belongs to the SHMT family. In terms of assembly, homodimer. Requires pyridoxal 5'-phosphate as cofactor.

The protein localises to the cytoplasm. It catalyses the reaction (6R)-5,10-methylene-5,6,7,8-tetrahydrofolate + glycine + H2O = (6S)-5,6,7,8-tetrahydrofolate + L-serine. The protein operates within one-carbon metabolism; tetrahydrofolate interconversion. It functions in the pathway amino-acid biosynthesis; glycine biosynthesis; glycine from L-serine: step 1/1. Functionally, catalyzes the reversible interconversion of serine and glycine with tetrahydrofolate (THF) serving as the one-carbon carrier. This reaction serves as the major source of one-carbon groups required for the biosynthesis of purines, thymidylate, methionine, and other important biomolecules. Also exhibits THF-independent aldolase activity toward beta-hydroxyamino acids, producing glycine and aldehydes, via a retro-aldol mechanism. In Ruthia magnifica subsp. Calyptogena magnifica, this protein is Serine hydroxymethyltransferase.